The primary structure comprises 206 residues: dTTP/UTP pyrophosphatase (206 aa).

D79 functions as the Proton acceptor in the catalytic mechanism.

It belongs to the Maf family. YhdE subfamily. Requires a divalent metal cation as cofactor.

Its subcellular location is the cytoplasm. The catalysed reaction is dTTP + H2O = dTMP + diphosphate + H(+). It catalyses the reaction UTP + H2O = UMP + diphosphate + H(+). Functionally, nucleoside triphosphate pyrophosphatase that hydrolyzes dTTP and UTP. May have a dual role in cell division arrest and in preventing the incorporation of modified nucleotides into cellular nucleic acids. This is dTTP/UTP pyrophosphatase from Rhizobium meliloti (strain 1021) (Ensifer meliloti).